The chain runs to 556 residues: Secreted RxLR effector protein 114 (556 aa).

Positions 1–19 (MCGAHFVAIALLVAAGCQT) are cleaved as a signal peptide. Disordered regions lie at residues 43–76 (LQSR…GVLK), 108–138 (NQLK…DSDK), and 389–408 (NDKS…EDWN). The RxLR-dEER signature appears at 46–66 (RNLRESRDSKDDLLSAGDEER). The span at 47–67 (NLRESRDSKDDLLSAGDEERT) shows a compositional bias: basic and acidic residues.

It belongs to the RxLR effector family.

The protein resides in the secreted. It localises to the host cell. Secreted effector that partially suppresses the host cell death induced by cell death-inducing proteins. The protein is Secreted RxLR effector protein 114 of Plasmopara viticola (Downy mildew of grapevine).